We begin with the raw amino-acid sequence, 550 residues long: O-phosphoserine--tRNA(Cys) ligase (550 aa).

A disordered region spans residues 1 to 32 (MRFNPQDWKEKSHTNFEGAWHDGPSVITPPGE). Substrate contacts are provided by residues 212 to 214 (HMT), 257 to 259 (SAS), 299 to 300 (YY), and asparagine 342.

The protein belongs to the class-II aminoacyl-tRNA synthetase family. O-phosphoseryl-tRNA(Cys) synthetase subfamily. Homotetramer. Interacts with SepCysS.

The catalysed reaction is tRNA(Cys) + O-phospho-L-serine + ATP = O-phospho-L-seryl-tRNA(Cys) + AMP + diphosphate. Functionally, catalyzes the attachment of O-phosphoserine (Sep) to tRNA(Cys). The protein is O-phosphoserine--tRNA(Cys) ligase of Methanoregula boonei (strain DSM 21154 / JCM 14090 / 6A8).